Here is a 320-residue protein sequence, read N- to C-terminus: 3-oxoacyl-[acyl-carrier-protein] reductase 1, chloroplastic (320 aa).

The transit peptide at 1 to 60 (MATTVAATKLTSLKAVKKLGFREIRQVRQWSPLQSAMPHFGMLRCGSRQSFATSTVVKAQ) directs the protein to the chloroplast. NADP(+) is bound at residue 82–106 (VTGASRGIGKAIALSLGKAGCKVLV). Substrate is bound at residue Ser214. The Proton acceptor role is filled by Tyr227.

Belongs to the short-chain dehydrogenases/reductases (SDR) family. In terms of assembly, homotetramer.

Its subcellular location is the plastid. The protein resides in the chloroplast. The enzyme catalyses a (3R)-hydroxyacyl-[ACP] + NADP(+) = a 3-oxoacyl-[ACP] + NADPH + H(+). It participates in lipid metabolism; fatty acid biosynthesis. This Brassica napus (Rape) protein is 3-oxoacyl-[acyl-carrier-protein] reductase 1, chloroplastic (gbkr1).